The primary structure comprises 218 residues: Protein-methionine-sulfoxide reductase heme-binding subunit MsrQ (218 aa).

5 consecutive transmembrane segments (helical) span residues 8-28, 60-80, 86-106, 121-141, and 155-175; these read VIVAKTLVHAAALAPIALLGW, FLLITLAITPLRQLTGQAVLI, LGLYAFFYATVHLAAYLTLDL, PYITVGFAAWLLLMPLAITST, and VHMLIYPIGLLAVLHFWWLVK.

Belongs to the MsrQ family. In terms of assembly, heterodimer of a catalytic subunit (MsrP) and a heme-binding subunit (MsrQ). Requires FMN as cofactor. Heme b is required as a cofactor.

The protein localises to the cell inner membrane. Its function is as follows. Part of the MsrPQ system that repairs oxidized periplasmic proteins containing methionine sulfoxide residues (Met-O), using respiratory chain electrons. Thus protects these proteins from oxidative-stress damage caused by reactive species of oxygen and chlorine generated by the host defense mechanisms. MsrPQ is essential for the maintenance of envelope integrity under bleach stress, rescuing a wide series of structurally unrelated periplasmic proteins from methionine oxidation. MsrQ provides electrons for reduction to the reductase catalytic subunit MsrP, using the quinone pool of the respiratory chain. The protein is Protein-methionine-sulfoxide reductase heme-binding subunit MsrQ of Xanthomonas oryzae pv. oryzae (strain MAFF 311018).